Here is a 176-residue protein sequence, read N- to C-terminus: Cytochrome c-552 (176 aa).

A helical; Signal-anchor transmembrane segment spans residues 12 to 32; sequence GALIGSLLFLLLMSWAASGIF. Heme c-binding residues include Cys90, Cys93, His94, Met126, and Met154.

Binds 1 heme c group covalently per subunit.

The protein resides in the cell membrane. Its function is as follows. Mediates the electron transport between the cytochrome bc1 complex and cytochrome-c oxidase. The polypeptide is Cytochrome c-552 (cycM) (Paracoccus denitrificans).